Consider the following 664-residue polypeptide: Protein SIEVE ELEMENT OCCLUSION C (664 aa).

The polypeptide is Protein SIEVE ELEMENT OCCLUSION C (Arabidopsis thaliana (Mouse-ear cress)).